Consider the following 101-residue polypeptide: Apolipoprotein C-II (101 aa).

An N-terminal signal peptide occupies residues 1–22; that stretch reads MGTRCLLVLLLVLLVLRCDVQG. Positions 23 to 28 are cleaved as a propeptide — removed in mature form; sequence DDMARQ. A lipid binding region spans residues 66 to 74; sequence AVDEKIRDM. The interval 78 to 101 is lipoprotein lipase cofactor; the sequence is STAAVRIYTGILTDQILSMLSGDS.

It belongs to the apolipoprotein C2 family. In terms of processing, proapolipoprotein C-II is synthesized as a sialic acid containing glycoprotein which is subsequently desialylated prior to its proteolytic processing. Proapolipoprotein C-II, the major form found in plasma undergoes proteolytic cleavage of its N-terminal hexapeptide to generate the mature form apolipoprotein C-II, which occurs as the minor form in plasma.

The protein localises to the secreted. Its function is as follows. Component of chylomicrons, very low-density lipoproteins (VLDL), low-density lipoproteins (LDL), and high-density lipoproteins (HDL) in plasma. Plays an important role in lipoprotein metabolism as an activator of lipoprotein lipase, the enzyme which hydrolyzes the triacylglycerols on chylomicrons and VLDL. In Acinonyx jubatus (Cheetah), this protein is Apolipoprotein C-II (APOC2).